The chain runs to 233 residues: 2,3,4,5-tetrahydropyridine-2,6-dicarboxylate N-acetyltransferase (233 aa).

This sequence belongs to the transferase hexapeptide repeat family. DapH subfamily.

The catalysed reaction is (S)-2,3,4,5-tetrahydrodipicolinate + acetyl-CoA + H2O = L-2-acetamido-6-oxoheptanedioate + CoA. It participates in amino-acid biosynthesis; L-lysine biosynthesis via DAP pathway; LL-2,6-diaminopimelate from (S)-tetrahydrodipicolinate (acetylase route): step 1/3. Catalyzes the transfer of an acetyl group from acetyl-CoA to tetrahydrodipicolinate. The sequence is that of 2,3,4,5-tetrahydropyridine-2,6-dicarboxylate N-acetyltransferase from Petrotoga mobilis (strain DSM 10674 / SJ95).